A 293-amino-acid polypeptide reads, in one-letter code: Elongation factor Ts (293 aa).

The interval 79–82 (TDFV) is involved in Mg(2+) ion dislocation from EF-Tu.

Belongs to the EF-Ts family.

It is found in the cytoplasm. Functionally, associates with the EF-Tu.GDP complex and induces the exchange of GDP to GTP. It remains bound to the aminoacyl-tRNA.EF-Tu.GTP complex up to the GTP hydrolysis stage on the ribosome. The polypeptide is Elongation factor Ts (Bacillus velezensis (strain DSM 23117 / BGSC 10A6 / LMG 26770 / FZB42) (Bacillus amyloliquefaciens subsp. plantarum)).